The sequence spans 134 residues: uncharacterized protein (134 aa).

This is an uncharacterized protein from Acanthamoeba polyphaga (Amoeba).